The chain runs to 663 residues: MIDKRDDKPFKLKSKYKPSGDQPQAIESLVDNIEGGEKAQILLGATGTGKTYTMSQVISKVNKPTLVIAHNKTLAGQLYGEFKEFFPDNAVEYFVSYYDYYQPEAYVPSSDTYIEKDSSVNDEIDKLRHSATSSLLERNDVIVVASVSCIYGLGSPKEYADSAVSLRPGQEISRDTLLNQLVDIQFERNDIDFQRGCFRVRGDVVEVFPASRDEHAFRVEFFGDEIDRICEIESLTGKTIGEVDHLVLFPATHFVTNDEHMEQSIAKIQAELAEQLQLFESEGKLLEAQRLRQRTEYDIEMLREMGYTSGVENYSRHMDGRSPGEPPYTLLDFFPEDFLIMIDESHMTMGQIKGMYNGDQARKQMLVDYGFRLPSALDNRPLRRKEFESHVHQIVYVSATPGEYEMSQTNTIIEQIIRPTGLLDPEIDVRPSMGQMDDLLGEINQRVARDERTFITTLTKKMAEDLTDYLKEMGVKVKYMHSDIKTLERTEIIRDLRLGVFDVLIGINLLREGIDVPEVSLVAILDADKEGFLRNERGLIQTIGRAARNVDGHVIMYADKMTDSMQRAIDETARRREIQIAYNKAHGIVPQTIKKDIRGFISISKTSHNDISKEEMDYESMSRGERKEAINALQKQMQEAAELLDFELAAQMRDLILELKLMD.

Residues 1–10 are compositionally biased toward basic and acidic residues; that stretch reads MIDKRDDKPF. The tract at residues 1-23 is disordered; it reads MIDKRDDKPFKLKSKYKPSGDQP. Positions 31 to 418 constitute a Helicase ATP-binding domain; sequence DNIEGGEKAQ…TNTIIEQIIR (388 aa). An ATP-binding site is contributed by 44–51; it reads GATGTGKT. The Beta-hairpin signature appears at 97–120; that stretch reads YYDYYQPEAYVPSSDTYIEKDSSV. The 163-residue stretch at 435–597 folds into the Helicase C-terminal domain; that stretch reads QMDDLLGEIN…IVPQTIKKDI (163 aa). One can recognise a UVR domain in the interval 627–662; it reads KEAINALQKQMQEAAELLDFELAAQMRDLILELKLM.

This sequence belongs to the UvrB family. Forms a heterotetramer with UvrA during the search for lesions. Interacts with UvrC in an incision complex.

The protein localises to the cytoplasm. Functionally, the UvrABC repair system catalyzes the recognition and processing of DNA lesions. A damage recognition complex composed of 2 UvrA and 2 UvrB subunits scans DNA for abnormalities. Upon binding of the UvrA(2)B(2) complex to a putative damaged site, the DNA wraps around one UvrB monomer. DNA wrap is dependent on ATP binding by UvrB and probably causes local melting of the DNA helix, facilitating insertion of UvrB beta-hairpin between the DNA strands. Then UvrB probes one DNA strand for the presence of a lesion. If a lesion is found the UvrA subunits dissociate and the UvrB-DNA preincision complex is formed. This complex is subsequently bound by UvrC and the second UvrB is released. If no lesion is found, the DNA wraps around the other UvrB subunit that will check the other stand for damage. The sequence is that of UvrABC system protein B from Streptococcus pyogenes serotype M18 (strain MGAS8232).